The primary structure comprises 794 residues: Protein SPA1-RELATED 4 (794 aa).

A Protein kinase domain is found at 1 to 268 (MKGSSESSSR…MSELLQSEFI (268 aa)). Residues 126–165 (SCSDSGSDEDATTKSREIGSSRQEEILSERRSKQQEEVKK) form a disordered region. The span at 136–165 (ATTKSREIGSSRQEEILSERRSKQQEEVKK) shows a compositional bias: basic and acidic residues. Residues 272-326 (RENLEEREAAMELRDRIEEQELLLEFLFLIQQRKQEAADKLQDTISLLSSDIDQV) adopt a coiled-coil conformation. Disordered regions lie at residues 352–373 (QGAETTAAEEENDDNSIDEESK) and 428–447 (GRSSEKSSMSQPSKDPINDS). Residues 358 to 369 (AAEEENDDNSID) show a composition bias toward acidic residues. WD repeat units lie at residues 482–521 (NSSNLVCAIGFDRDGEFFATAGVNKKIKIFECESIIKDGR), 531–571 (ASRS…LVTE), 574–614 (EHEK…SIGT), 616–656 (KTKA…LPLC), 660–698 (GHHKTVSYVRFVDSSTLVSSSTDNTLKLWDLSMSISGIN), 707–746 (GHTNVKNFVGLSVSDGYIATGSETNEVFVYHKAFPMPVLS), and 762–794 (DASQFISSVCWRGQSSTLVAANSTGNIKILEMV). A DWD box motif is present at residues 635 to 649 (AFGSADHKVYYYDLR).

As to quaternary structure, interacts with COP1 and CO. Binds to CRY1 in response to blue light, this interaction prevents SPA1/COP1 complex formation and thus avoid COP1-dependent degradation of the transcription factor HY5 by the proteasome and promotes hypocotyl elongation.

The protein localises to the nucleus. Its function is as follows. Repressor of photomorphogenesis in the light. Probably part of the COP1/SPA E3 ubiquitin-protein ligase complex. The polypeptide is Protein SPA1-RELATED 4 (SPA4) (Arabidopsis thaliana (Mouse-ear cress)).